The primary structure comprises 203 residues: Hypoxanthine-guanine phosphoribosyltransferase (203 aa).

Diphosphate is bound by residues Lys66 and Gly67. Residues Glu122 and Asp123 each coordinate Mg(2+). The Proton acceptor role is filled by Asp126. GMP-binding positions include Lys154, Phe175–Val176, and Asp182. A diphosphate-binding site is contributed by Arg188.

The protein belongs to the purine/pyrimidine phosphoribosyltransferase family. Mg(2+) is required as a cofactor.

It is found in the cytoplasm. It catalyses the reaction IMP + diphosphate = hypoxanthine + 5-phospho-alpha-D-ribose 1-diphosphate. The enzyme catalyses GMP + diphosphate = guanine + 5-phospho-alpha-D-ribose 1-diphosphate. The protein operates within purine metabolism; IMP biosynthesis via salvage pathway; IMP from hypoxanthine: step 1/1. It functions in the pathway purine metabolism; GMP biosynthesis via salvage pathway; GMP from guanine: step 1/1. In terms of biological role, purine salvage pathway enzyme that catalyzes the transfer of the ribosyl-5-phosphate group from 5-phospho-alpha-D-ribose 1-diphosphate (PRPP) to the N9 position of the 6-oxopurines hypoxanthine and guanine to form the corresponding ribonucleotides IMP (inosine 5'-monophosphate) and GMP (guanosine 5'-monophosphate), with the release of PPi. In Mycobacterium avium, this protein is Hypoxanthine-guanine phosphoribosyltransferase (hpt).